Here is a 336-residue protein sequence, read N- to C-terminus: Prenytransferase ascA (336 aa).

The tract at residues 1–26 (MAAKSRSPKRGTSEKTPLVEKEAPYQ) is disordered. Over residues 11 to 23 (GTSEKTPLVEKEA) the composition is skewed to basic and acidic residues. Transmembrane regions (helical) follow at residues 52–72 (PHGNYMIYFPHIIGLMYASAI), 74–94 (PTELSVLGHRAAIFAIWTFLM), 131–151 (GHVFTLILTLLGFAAIQSLPI), 179–199 (VILGSTLASTIALSAYSVGLP), 206–226 (FVPTLCLSATIMLLVVFYDVV), 251–271 (LEGLFAFITLSIAGSLTTLGY), 272–292 (LVGMGHWFYLFSVGGLTFGLV), and 314–334 (FAILNLLTGFIMEYATKDYVV).

It belongs to the UbiA prenyltransferase family. Mg(2+) is required as a cofactor.

The protein localises to the membrane. The enzyme catalyses orsellinate + (2E,6E)-farnesyl diphosphate = ilicicolinate B + diphosphate. Its pathway is secondary metabolite biosynthesis; terpenoid biosynthesis. Prenytransferase; part of the asc-1 gene cluster that mediates the biosynthesis of both ascochlorin and ascofuranone, a strong inhibitor of cyanide-insensitive alternative oxidases and a promising drug candidate against African trypanosomiasis. The first step in the pathway is performed by the non-reducing polyketide synthase ascC that produces orsellinic acid by condensing acetyl-CoA with 3 malonyl-CoA units. Orsellinic acid is then prenylated by the prenyltransferase ascA to yield ilicicolinic acid B. Ilicicolinic acid B is further reduced to ilicicolin B by the reductase ascB. The halogenase ascD then chlorinates ilicicolin B to produce ilicicolin A which is converted to ilicicolin A epoxide by the cytochrome P450 monooxygenase ascE that catalyzes stereoselective epoxidation of the terminal double bond of the prenyl group. Ilicicolin A epoxide is the last common precursor for the biosynthesis of ascofuranone and ascochlorin. The terpene cyclase ascF produces a monocyclic terpene, and the cyclization reaction is proposed to be initiated by protonation of the terminal epoxide of ilicicolin A epoxide to generate a monocyclic tertiarycation, which is followed by a series of hydride and methyl shifts with abstraction of proton, leading to the formation of the (14S,15R,19R)-trimethylcyclohexanone ring structure of ilicicolin C, which is finally reduced to ascochlorin by the dehydrogenase ascG. On the other hand, ilicicolin A epoxide is hydroxylated by the cytochrome P450 monooxygenase ascH, and the resultant product is cyclized by the terpene cyclase ascI to ascofuranol via protonation-initiated epoxide ring opening, which facilitates the 6-endo-tet cyclization to form the tetrahy-drofuran ring. Finally, ascofuranol is oxidized into ascofuranone by ascJ. This chain is Prenytransferase ascA, found in Acremonium egyptiacum (Oospora egyptiaca).